Reading from the N-terminus, the 433-residue chain is MSISIETLEGLQRRVTITVAADKIEAAYKEQLKGYAKNARVDGFRKGKVPHAIIEQRFGLAARQDVLSDEMQRAFFDAVIAEKINLAGRPTFTPNNYQPSQEFSFTATFEVFPEVELKGLENIEVEKPVVEITEADLDKMIDVLRKQQATWAESQAAAQAEDRVVIDFVGSVDGEEFEGGKATDFTLAMGQSRMIPGFEEGIVGHKAGEQFDIDVTFPEEYHAENLKGKAAKFAITLKKVENIVLPELTEEFVKKFGSAKTVEDLRAEIKKNMQRELKNAVTARVKNQVINGLIAQNEIEVPAAAVAEEVDVLRRQAVQRFGGKPEMAAQLPAELFEADAKRRVQVGLLLSTVIGTNELKVDEKRVEETIAEIASAYEQPAEVVAHYAKNRQLTENIRNVVLEEQAVEVVLAKAKVTEKATSFDEVMAQQAQG.

Positions 161 to 246 (EDRVVIDFVG…LKKVENIVLP (86 aa)) constitute a PPIase FKBP-type domain.

The protein belongs to the FKBP-type PPIase family. Tig subfamily.

It is found in the cytoplasm. The enzyme catalyses [protein]-peptidylproline (omega=180) = [protein]-peptidylproline (omega=0). Functionally, involved in protein export. Acts as a chaperone by maintaining the newly synthesized protein in an open conformation. Functions as a peptidyl-prolyl cis-trans isomerase. The protein is Trigger factor of Actinobacillus pleuropneumoniae serotype 7 (strain AP76).